The primary structure comprises 369 residues: MPPMLWLLLNFAAPALGFYFSISCPSGKQCQQALLSGNDILLYCNSSGAHWYYLFTQGKKGRLASLTNISNMEIMPEGSLLIKDPSPSQTGLYHCWNKNGRQVVQYEIDFQDISTLHVTHKDLGQRPLQNETLPLGSKELIFTRWEPWQDCNRCKEPGERKRLGYCYIEEPLKEAMPCWLYLGEMLVWSSRLRPELQVEACHVRCTNNTQLRVDYVIFDNFRLDEETEFVWLDCPLGSMYRPVYWHANDTPLTWESQLSGRDFTTFLDPSTGGRQLQVFQPAIYKCFVQQELVAQFNPATSPETLEAQWRENDAQWREARKALPGRADSVLKGLKLVLLVGTVLVLLGALLKFIRPSPGKRSKQVLMVK.

The first 17 residues, 1–17 (MPPMLWLLLNFAAPALG), serve as a signal peptide directing secretion. Residues 18–333 (FYFSISCPSG…PGRADSVLKG (316 aa)) lie on the Extracellular side of the membrane. Asn45, Asn68, and Asn130 each carry an N-linked (GlcNAc...) asparagine glycan. Residues 334–354 (LKLVLLVGTVLVLLGALLKFI) traverse the membrane as a helical segment. Over 355 to 369 (RPSPGKRSKQVLMVK) the chain is Cytoplasmic.

The protein belongs to the FAM187 family.

The protein resides in the membrane. The chain is Protein FAM187B (FAM187B) from Macaca fascicularis (Crab-eating macaque).